The primary structure comprises 61 residues: Small ribosomal subunit protein uS14B (61 aa).

Residues Cys-24, Cys-27, Cys-40, and Cys-43 each contribute to the Zn(2+) site.

It belongs to the universal ribosomal protein uS14 family. Zinc-binding uS14 subfamily. In terms of assembly, part of the 30S ribosomal subunit. Contacts proteins S3 and S10. Zn(2+) serves as cofactor.

Functionally, binds 16S rRNA, required for the assembly of 30S particles and may also be responsible for determining the conformation of the 16S rRNA at the A site. The sequence is that of Small ribosomal subunit protein uS14B from Lactococcus lactis subsp. lactis (strain IL1403) (Streptococcus lactis).